We begin with the raw amino-acid sequence, 858 residues long: Elongation factor 2 (858 aa).

Residues 17–362 (ANIRNMSVIA…MITIHLPSPV (346 aa)) form the tr-type G domain. GTP contacts are provided by residues 26 to 33 (AHVDHGKS), 158 to 161 (NKMD), and 216 to 218 (SGL). Residue His-715 is modified to Diphthamide.

This sequence belongs to the TRAFAC class translation factor GTPase superfamily. Classic translation factor GTPase family. EF-G/EF-2 subfamily. In terms of assembly, binds to 80S ribosomes. Actively translating ribosomes show mutually exclusive binding of eIF5a (EIF5A or EIF5A2) and EEF2/eEF2. Interacts with serbp1; interaction sequesters eef2/eEF2 at the A-site of the ribosome, thereby blocking the interaction sites of the mRNA-tRNA complex, promoting ribosome stabilization and hibernation. Interacts with habp4; interaction takes place at the A-site of hibernating ribosomes and promotes ribosome stabilization.

It localises to the cytoplasm. It is found in the nucleus. It carries out the reaction GTP + H2O = GDP + phosphate + H(+). In terms of biological role, catalyzes the GTP-dependent ribosomal translocation step during translation elongation. During this step, the ribosome changes from the pre-translocational (PRE) to the post-translocational (POST) state as the newly formed A-site-bound peptidyl-tRNA and P-site-bound deacylated tRNA move to the P and E sites, respectively. Catalyzes the coordinated movement of the two tRNA molecules, the mRNA and conformational changes in the ribosome. The sequence is that of Elongation factor 2 from Xenopus laevis (African clawed frog).